The sequence spans 99 residues: Photosystem II reaction center Psb28 protein (99 aa).

It belongs to the Psb28 family. As to quaternary structure, part of the photosystem II complex.

The protein localises to the cell inner membrane. This is Photosystem II reaction center Psb28 protein from Gloeobacter violaceus (strain ATCC 29082 / PCC 7421).